A 1949-amino-acid polypeptide reads, in one-letter code: Protein GREB1 (1949 aa).

Disordered stretches follow at residues 52-77, 302-334, and 1085-1210; these read EGGSRVDNEEEEEEGEGGLETNGPPN, ILSNSGPPKKRHKGWSPESPSAPDGGCPQGGGN, and EALE…GQRS. Residues 59–68 are compositionally biased toward acidic residues; the sequence is NEEEEEEGEG. 2 stretches are compositionally biased toward basic and acidic residues: residues 1085–1095 and 1110–1126; these read EALESDAEKLS and TSEKRSPMKRERSRSHD. Residues 1127-1147 are compositionally biased toward low complexity; the sequence is SASSSLSSKASGSALGGESSA. Over residues 1166–1178 the composition is skewed to basic and acidic residues; that stretch reads PAEEGRAPGEKQR. A helical membrane pass occupies residues 1868–1888; that stretch reads DLLFSGLLLYLCDSFVGASFL.

This sequence belongs to the GREB1 family. Expressed in proliferating prostatic tissue and prostate cancer.

It is found in the membrane. In terms of biological role, may play a role in estrogen-stimulated cell proliferation. Acts as a regulator of hormone-dependent cancer growth in breast and prostate cancers. The polypeptide is Protein GREB1 (GREB1) (Homo sapiens (Human)).